The chain runs to 406 residues: Renin (406 aa).

An N-terminal signal peptide occupies residues 1–23; it reads MDGWRRMPRWGLLLLLWGSCTFG. The propeptide at 24–66 is activation peptide; the sequence is LPTDTTTFKRIFLKRMPSIRESLKERGVDMARLGPEWSQPMKR. The N-linked (GlcNAc...) asparagine glycan is linked to asparagine 71. The Peptidase A1 domain occupies 86-403; that stretch reads YYGEIGIGTP…DRRNNRIGFA (318 aa). Aspartate 104 is a catalytic residue. A disulfide bridge connects residues cysteine 117 and cysteine 124. An N-linked (GlcNAc...) asparagine glycan is attached at asparagine 141. Residues cysteine 283 and cysteine 287 are joined by a disulfide bond. Aspartate 292 is a catalytic residue. Cysteines 325 and 362 form a disulfide.

The protein belongs to the peptidase A1 family. As to quaternary structure, interacts with ATP6AP2.

The protein localises to the secreted. It localises to the membrane. The catalysed reaction is Cleavage of Leu-|-Xaa bond in angiotensinogen to generate angiotensin I.. Its activity is regulated as follows. Interaction with ATP6AP2 results in a 5-fold increased efficiency in angiotensinogen processing. Its function is as follows. Renin is a highly specific endopeptidase, whose only known function is to generate angiotensin I from angiotensinogen in the plasma, initiating a cascade of reactions that produce an elevation of blood pressure and increased sodium retention by the kidney. The sequence is that of Renin (REN) from Macaca mulatta (Rhesus macaque).